We begin with the raw amino-acid sequence, 168 residues long: Large ribosomal subunit protein uL10 (168 aa).

Belongs to the universal ribosomal protein uL10 family. In terms of assembly, part of the ribosomal stalk of the 50S ribosomal subunit. The N-terminus interacts with L11 and the large rRNA to form the base of the stalk. The C-terminus forms an elongated spine to which L12 dimers bind in a sequential fashion forming a multimeric L10(L12)X complex.

In terms of biological role, forms part of the ribosomal stalk, playing a central role in the interaction of the ribosome with GTP-bound translation factors. This is Large ribosomal subunit protein uL10 from Acinetobacter baumannii (strain AB307-0294).